The primary structure comprises 202 residues: uncharacterized protein (202 aa).

One can recognise an START domain in the interval 1-202 (MRGILRMTVL…KGLRSAAEKR (202 aa)).

May play a role in the interaction of the bacterium with animal cells. This is an uncharacterized protein from Pseudomonas aeruginosa (strain ATCC 15692 / DSM 22644 / CIP 104116 / JCM 14847 / LMG 12228 / 1C / PRS 101 / PAO1).